The following is a 1043-amino-acid chain: Peroxisomal ATPase PEX1 (1043 aa).

The tract at residues Ala-453–Arg-626 is AAA-cassette D1. ATP-binding positions include Gly-461 to Thr-468 and Gly-738 to Thr-745. The interval Gly-733–His-926 is AAA-cassette D2.

This sequence belongs to the AAA ATPase family. In terms of assembly, interacts with PEX6; forming the PEX1-PEX6 AAA ATPase complex, which is composed of a heterohexamer formed by a trimer of PEX1-PEX6 dimers. The PEX1-PEX6 heterooligomers associate with the peroxisomal importomer via interaction of PEX6 with the peroxisomal membrane anchor PEX15.

It is found in the cytoplasm. The protein resides in the cytosol. It localises to the peroxisome membrane. The enzyme catalyses ATP + H2O = ADP + phosphate + H(+). In terms of biological role, component of the PEX1-PEX6 AAA ATPase complex, a protein dislocase complex that mediates the ATP-dependent extraction of the PEX5 receptor from peroxisomal membranes, an essential step for PEX5 recycling. Specifically recognizes PEX5 monoubiquitinated at 'Cys-6', and pulls it out of the peroxisome lumen through the PEX2-PEX10-PEX12 retrotranslocation channel. Extraction by the PEX1-PEX6 AAA ATPase complex is accompanied by unfolding of the TPR repeats and release of bound cargo from PEX5. This Saccharomyces cerevisiae (strain ATCC 204508 / S288c) (Baker's yeast) protein is Peroxisomal ATPase PEX1.